We begin with the raw amino-acid sequence, 345 residues long: Phosphate acyltransferase (345 aa).

It belongs to the PlsX family. Homodimer. Probably interacts with PlsY.

It localises to the cytoplasm. The catalysed reaction is a fatty acyl-[ACP] + phosphate = an acyl phosphate + holo-[ACP]. It functions in the pathway lipid metabolism; phospholipid metabolism. Functionally, catalyzes the reversible formation of acyl-phosphate (acyl-PO(4)) from acyl-[acyl-carrier-protein] (acyl-ACP). This enzyme utilizes acyl-ACP as fatty acyl donor, but not acyl-CoA. This is Phosphate acyltransferase from Photorhabdus laumondii subsp. laumondii (strain DSM 15139 / CIP 105565 / TT01) (Photorhabdus luminescens subsp. laumondii).